We begin with the raw amino-acid sequence, 115 residues long: MNLILTLLINTLLSSVLVLIAFWLPQLNIYTEKSSPYECGFDPMVSARLPFSMKFFLVAITFLLFDLEIALLLPLPWASQTTNLKTMLTMALILISLLAASLAYEWTQKGLEWTE.

Transmembrane regions (helical) follow at residues 3 to 23, 55 to 75, and 86 to 106; these read LILTLLINTLLSSVLVLIAFW, FFLVAITFLLFDLEIALLLPL, and TMLTMALILISLLAASLAYEW.

The protein belongs to the complex I subunit 3 family. In terms of assembly, core subunit of respiratory chain NADH dehydrogenase (Complex I) which is composed of 45 different subunits. Interacts with TMEM186. Interacts with TMEM242.

It is found in the mitochondrion inner membrane. It carries out the reaction a ubiquinone + NADH + 5 H(+)(in) = a ubiquinol + NAD(+) + 4 H(+)(out). Its function is as follows. Core subunit of the mitochondrial membrane respiratory chain NADH dehydrogenase (Complex I) which catalyzes electron transfer from NADH through the respiratory chain, using ubiquinone as an electron acceptor. Essential for the catalytic activity of complex I. In Rhinoceros unicornis (Greater Indian rhinoceros), this protein is NADH-ubiquinone oxidoreductase chain 3.